Reading from the N-terminus, the 287-residue chain is uncharacterized protein (287 aa).

A compositionally biased stretch (basic and acidic residues) spans 1 to 17 (MRWQGRRESDNVEDRRN). Positions 1-29 (MRWQGRRESDNVEDRRNSSGGPSMGGPGF) are disordered. A helical transmembrane segment spans residues 38–60 (LILLIVVLVAGYYGVDLTGLMTG).

Its subcellular location is the membrane. This is an uncharacterized protein from Escherichia coli O6:H1 (strain CFT073 / ATCC 700928 / UPEC).